The chain runs to 562 residues: Phosphoenolpyruvate carboxykinase (ATP) (562 aa).

265 to 272 (GLSGTGKT) contributes to the ATP binding site.

This sequence belongs to the phosphoenolpyruvate carboxykinase (ATP) family.

It catalyses the reaction oxaloacetate + ATP = phosphoenolpyruvate + ADP + CO2. It participates in carbohydrate biosynthesis; gluconeogenesis. The sequence is that of Phosphoenolpyruvate carboxykinase (ATP) (pckA) from Dictyostelium discoideum (Social amoeba).